The chain runs to 388 residues: Basigin (388 aa).

The signal sequence occupies residues 1–21; that stretch reads MAAGADVPCAVLALLVLGSLA. Residues 27–323 lie on the Extracellular side of the membrane; that stretch reads TAGFIKSPLS…SGSATVNLRV (297 aa). Positions 43–131 constitute an Ig-like domain; it reads DSVELHCEAV…NHLSKSPKVK (89 aa). Disulfide bonds link cysteine 49-cysteine 113 and cysteine 162-cysteine 211. An Ig-like C2-type domain is found at 143–218; that stretch reads ERPVITGQYS…YECIYNTNPV (76 aa). Residues asparagine 163, asparagine 222, asparagine 280, asparagine 286, and asparagine 307 are each glycosylated (N-linked (GlcNAc...) asparagine). Residues 229-323 enclose the Ig-like V-type domain; that stretch reads PQVVAYKKSE…SGSATVNLRV (95 aa). Cysteines 250 and 306 form a disulfide. Residues 324–344 form a helical membrane-spanning segment; it reads RSRLAALWPFLGIVAEVLVLV. At 345-388 the chain is on the cytoplasmic side; the sequence is TIIFIYEKRRKPDEVLDDDDGGSAPLKSNATNHKDKNVRQRNAN. Positions 358–388 are disordered; sequence EVLDDDDGGSAPLKSNATNHKDKNVRQRNAN.

As to quaternary structure, interacts with NXNL1, SLC2A1 and SLC16A1. In terms of processing, N-glycosylated. As to expression, retinal cone photoreceptors (at protein level). In terms of tissue distribution, brain endothelial cells, kidney epithelial cells and erythroblasts (at protein level).

It localises to the cell membrane. The protein resides in the photoreceptor inner segment. It is found in the cell projection. Its subcellular location is the cilium. The protein localises to the photoreceptor outer segment. It localises to the endoplasmic reticulum membrane. The protein resides in the basolateral cell membrane. In terms of biological role, essential for normal retinal maturation and development. Acts as a retinal cell surface receptor for NXNL1 and plays an important role in NXNL1-mediated survival of retinal cone photoreceptors. In association with glucose transporter SLC16A1/GLUT1 and NXNL1, promotes retinal cone survival by enhancing aerobic glycolysis and accelerating the entry of glucose into photoreceptors. Its function is as follows. Signaling receptor for cyclophilins, essential for PPIA/CYPA and PPIB/CYPB-dependent signaling related to chemotaxis and adhesion of immune cells. Plays an important role in targeting the monocarboxylate transporters SLC16A1/GLUT1, SLC16A3, SLC16A8, SLC16A11 and SLC16A12 to the plasma membrane. Acts as a coreceptor for vascular endothelial growth factor receptor 2 (KDR/VEGFR2) in endothelial cells enhancing its VEGFA-mediated activation and downstream signaling. Promotes angiogenesis through EPAS1/HIF2A-mediated up-regulation of VEGFA and KDR/VEGFR2 in endothelial cells. This chain is Basigin (BSG), found in Gallus gallus (Chicken).